A 782-amino-acid chain; its full sequence is Coiled-coil alpha-helical rod protein 1 (782 aa).

2 stretches are compositionally biased toward basic and acidic residues: residues 62-74 and 208-218; these read ERDVSSDRQEPGR and ETRRAGEAKEL. Disordered stretches follow at residues 62–82 and 177–218; these read ERDVSSDRQEPGRRGRSWGLE and EQLS…AKEL. Coiled coils occupy residues 111–303, 344–437, and 498–691; these read LRET…SLTH, LMVQ…NAVS, and VTDV…QQEG.

As to expression, found in all tissues tested, abundantly expressed in heart, liver, skeletal muscle, kidney and pancreas, and to a lesser extent in lung and placenta. Overexpressed in keratinocytes of psoriatic lesions.

The protein localises to the cytoplasm. Its subcellular location is the nucleus. In terms of biological role, may be a regulator of keratinocyte proliferation or differentiation. The protein is Coiled-coil alpha-helical rod protein 1 (CCHCR1) of Homo sapiens (Human).